The chain runs to 438 residues: Delta(14)-sterol reductase ERG24 (438 aa).

Residues 1–13 (MVSALNPRTTEFE) lie on the Lumenal side of the membrane. Residues 14-34 (FGGLIGALGISIGLPVFTIIL) form a helical membrane-spanning segment. At 35–71 (NQMIRPDYFIKGFFQNFDIVELWNGIKPLRYYLGNRE) the chain is on the cytoplasmic side. The chain crosses the membrane as a helical span at residues 72–90 (LWTVYCLWYGILAVLDVIL). At 91–109 (PGRVMKGVQLRDGSKLSYK) the chain is on the lumenal side. A helical membrane pass occupies residues 110 to 127 (INGIAMSTTLVLVLAIRW). The Cytoplasmic portion of the chain corresponds to 128–147 (KLTDGQLPELQYLYENHVSL). A helical membrane pass occupies residues 148 to 172 (CIISILFSFFLATYCYVASFIPLIF). The Lumenal portion of the chain corresponds to 173–242 (KKNGNGKREK…LHHHYLKTGK (70 aa)). Residues 243-263 (INDALVLVNFLQGFYIFDGVL) form a helical membrane-spanning segment. Topologically, residues 264–308 (NEEGVLTMMDITTDGFGFMLAFGDLSLVPFTYSLQARYLSVSPVE) are cytoplasmic. A helical transmembrane segment spans residues 309–328 (LGWVKVVGILAIMFLGFHIF). Topologically, residues 329–368 (HSANKQKSEFRQGKLENLKSIQTKRGTKLLCDGWWAKSQH) are lumenal. NADP(+) is bound by residues K335, R339, L358, W363, 370 to 371 (NY), D410, 414 to 418 (CRLKY), and Y425. A helical membrane pass occupies residues 369–387 (INYFGDWLISLSWCLATWF). Over 388 to 438 (QTPLTYYYSLYFATLLLHRQQRDEHKCRLKYGENWEEYERKVPYKIIPYVY) the chain is Cytoplasmic.

The protein belongs to the ERG4/ERG24 family.

Its subcellular location is the membrane. It catalyses the reaction 4,4-dimethyl-5alpha-cholesta-8,24-dien-3beta-ol + NADP(+) = 4,4-dimethyl-5alpha-cholesta-8,14,24-trien-3beta-ol + NADPH + H(+). The protein operates within steroid biosynthesis; zymosterol biosynthesis; zymosterol from lanosterol: step 2/6. With respect to regulation, inhibited by the morpholine antifungal drug fenpropimorph. In terms of biological role, delta(14)-sterol reductase; part of the third module of ergosterol biosynthesis pathway that includes the late steps of the pathway. ERG24 reduces the C14=C15 double bond of 4,4-dimethyl-cholesta-8,14,24-trienol to produce 4,4-dimethyl-cholesta-8,24-dienol. The third module or late pathway involves the ergosterol synthesis itself through consecutive reactions that mainly occur in the endoplasmic reticulum (ER) membrane. Firstly, the squalene synthase ERG9 catalyzes the condensation of 2 farnesyl pyrophosphate moieties to form squalene, which is the precursor of all steroids. Squalene synthase is crucial for balancing the incorporation of farnesyl diphosphate (FPP) into sterol and nonsterol isoprene synthesis. Secondly, the squalene epoxidase ERG1 catalyzes the stereospecific oxidation of squalene to (S)-2,3-epoxysqualene, which is considered to be a rate-limiting enzyme in steroid biosynthesis. Then, the lanosterol synthase ERG7 catalyzes the cyclization of (S)-2,3 oxidosqualene to lanosterol, a reaction that forms the sterol core. In the next steps, lanosterol is transformed to zymosterol through a complex process involving various demethylation, reduction and desaturation reactions. The lanosterol 14-alpha-demethylase ERG11 (also known as CYP51) catalyzes C14-demethylation of lanosterol to produce 4,4'-dimethyl cholesta-8,14,24-triene-3-beta-ol, which is critical for ergosterol biosynthesis. The C-14 reductase ERG24 reduces the C14=C15 double bond of 4,4-dimethyl-cholesta-8,14,24-trienol to produce 4,4-dimethyl-cholesta-8,24-dienol. 4,4-dimethyl-cholesta-8,24-dienol is substrate of the C-4 demethylation complex ERG25-ERG26-ERG27 in which ERG25 catalyzes the three-step monooxygenation required for the demethylation of 4,4-dimethyl and 4alpha-methylsterols, ERG26 catalyzes the oxidative decarboxylation that results in a reduction of the 3-beta-hydroxy group at the C-3 carbon to an oxo group, and ERG27 is responsible for the reduction of the keto group on the C-3. ERG28 has a role as a scaffold to help anchor ERG25, ERG26 and ERG27 to the endoplasmic reticulum and ERG29 regulates the activity of the iron-containing C4-methylsterol oxidase ERG25. Then, the sterol 24-C-methyltransferase ERG6 catalyzes the methyl transfer from S-adenosyl-methionine to the C-24 of zymosterol to form fecosterol. The C-8 sterol isomerase ERG2 catalyzes the reaction which results in unsaturation at C-7 in the B ring of sterols and thus converts fecosterol to episterol. The sterol-C5-desaturase ERG3 then catalyzes the introduction of a C-5 double bond in the B ring to produce 5-dehydroepisterol. The C-22 sterol desaturase ERG5 further converts 5-dehydroepisterol into ergosta-5,7,22,24(28)-tetraen-3beta-ol by forming the C-22(23) double bond in the sterol side chain. Finally, ergosta-5,7,22,24(28)-tetraen-3beta-ol is substrate of the C-24(28) sterol reductase ERG4 to produce ergosterol. This chain is Delta(14)-sterol reductase ERG24, found in Saccharomyces cerevisiae (strain ATCC 204508 / S288c) (Baker's yeast).